A 45-amino-acid chain; its full sequence is Host translation inhibitor E66L (45 aa).

It belongs to the asfivirus E66L family.

The protein localises to the host endoplasmic reticulum. Its function is as follows. Inhibits host protein translation, probably through the EIF2AK2/EIF2S1 signaling pathway. Promotes cell retention in the G0/G1 phase. The polypeptide is Host translation inhibitor E66L (Ornithodoros (relapsing fever ticks)).